The sequence spans 588 residues: Juvenile hormone esterase (588 aa).

An N-terminal signal peptide occupies residues 1 to 23; that stretch reads MKFPKNLFLVLFYTSWKFCDVCA. Residues Asn-79 and Asn-83 are each glycosylated (N-linked (GlcNAc...) asparagine). A disulfide bond links Cys-91 and Cys-109. The active-site Acyl-ester intermediate is the Ser-214. Asn-257 carries N-linked (GlcNAc...) asparagine glycosylation. A disulfide bridge links Cys-268 with Cys-281. Glu-350 serves as the catalytic Charge relay system. N-linked (GlcNAc...) asparagine glycosylation is found at Asn-389, Asn-396, and Asn-472. His-479 serves as the catalytic Charge relay system.

It belongs to the type-B carboxylesterase/lipase family.

The protein localises to the secreted. It carries out the reaction juvenile hormone III + H2O = juvenile hormone III carboxylate + methanol + H(+). With respect to regulation, inhibited by 3-octylthio-1,1,1-trifluoro-2-propanone (OTFP), a specific inhibitor of juvenile hormone esterase (JHE), but not by diisopropyl fluorophosphate (DFP), a serine enzyme inhibitor. May function as a juvenile hormone (JH)-specific degradation enzyme in vivo decreasing JH activity. Hydrolyzes JH III in vitro. Hydrolyzes effectively also methyl hepthylthioacetothioate (HEPTAT), a synthetic substrate. Of the general esterase substrates, it has preference for 2-naphthyl acetate (2-NA) and shows a weak activity for 1-NA and 4-nitrophenylacetate (4-NPA). The polypeptide is Juvenile hormone esterase (Tribolium castaneum (Red flour beetle)).